We begin with the raw amino-acid sequence, 106 residues long: Putative regulatory protein MalR (106 aa).

Residues Cys-12–Asn-106 enclose the HTH hxlR-type domain.

In terms of biological role, potential regulator of the malBH genes. This is Putative regulatory protein MalR (malR) from Fusobacterium mortiferum.